Here is a 361-residue protein sequence, read N- to C-terminus: Tyrosine--tRNA ligase (361 aa).

5 residues coordinate L-tyrosine: tyrosine 36, tyrosine 162, glutamine 166, aspartate 169, and glutamine 184. Residues 236–240 carry the 'KMSKS' region motif; sequence KMSKS. Lysine 239 is an ATP binding site.

Belongs to the class-I aminoacyl-tRNA synthetase family. TyrS type 4 subfamily. As to quaternary structure, homodimer.

It localises to the cytoplasm. The catalysed reaction is tRNA(Tyr) + L-tyrosine + ATP = L-tyrosyl-tRNA(Tyr) + AMP + diphosphate + H(+). Catalyzes the attachment of tyrosine to tRNA(Tyr) in a two-step reaction: tyrosine is first activated by ATP to form Tyr-AMP and then transferred to the acceptor end of tRNA(Tyr). The polypeptide is Tyrosine--tRNA ligase (Saccharolobus islandicus (strain Y.N.15.51 / Yellowstone #2) (Sulfolobus islandicus)).